The sequence spans 382 residues: RNA binding protein fox-1 homolog 1-like (382 aa).

2 disordered regions span residues Q34–P79 and G94–R148. Over residues Y49–P65 the composition is skewed to pro residues. The segment covering E101–D110 has biased composition (polar residues). One can recognise an RRM domain in the interval K147–A223.

In terms of tissue distribution, expressed during muscle development in adaxial cells, somites, cardiac precursors, finbuds and jaw muscle cells.

The protein localises to the nucleus. In terms of biological role, RNA-binding protein that regulates alternative splicing events by binding to 5'-GCAUG-3' elements. Regulates alternative splicing of tissue-specific exons. In Danio rerio (Zebrafish), this protein is RNA binding protein fox-1 homolog 1-like (rbfox1l).